The chain runs to 177 residues: Inorganic pyrophosphatase (177 aa).

Substrate is bound by residues Lys-31, Arg-45, and Tyr-57. Residues Asp-67, Asp-72, and Asp-104 each coordinate Mg(2+). Tyr-142 contributes to the substrate binding site.

It belongs to the PPase family. As to quaternary structure, homohexamer. The cofactor is Mg(2+).

It is found in the cytoplasm. It carries out the reaction diphosphate + H2O = 2 phosphate + H(+). Its function is as follows. Catalyzes the hydrolysis of inorganic pyrophosphate (PPi) forming two phosphate ions. The polypeptide is Inorganic pyrophosphatase (Neisseria meningitidis serogroup A / serotype 4A (strain DSM 15465 / Z2491)).